Consider the following 795-residue polypeptide: MSKRHRLDLGEDYPSGKKRAGTDGKDRDRDRDREDRSKDRDRERDRGDREREREKEKEKELRASTNAMLISAGLPPLKASHSAHSTHSAHSTHSTHSAHSTHAGHAGHTSLPQCINPFTNLPHTPRYYDILKKRLQLPVWEYKDRFTDILVRHQSFVLVGETGSGKTTQIPQWCVEYMRSLPGPKRGVACTQPRRVAAMSVAQRVADEMDVMLGQEVGYSIRFEDCSSAKTILKYMTDGMLLREAMNDPLLERYGVIILDEAHERTLATDILMGVLKEVVRQRSDLKVIVMSATLDAGKFQIYFDNCPLLTIPGRTHPVEIFYTPEPERDYLEAAIRTVIQIHMCEEEEGDLLLFLTGQEEIDEACKRIKREVDDLGPEVGDIKIIPLYSTLPPQQQQRIFEPPPPKKQNGAIGRKVVVSTNIAETSLTIDGVVFVIDPGFAKQKVYNPRIRVESLLVTAISKASAQQRAGRAGRTRPGKCFRLYTEKAYKTEMQDNTYPEILRSNLGSVVLQLKKLGIDDLVHFDFMDPPAPETLMRALELLNYLAALNDDGDLTELGSMMAEFPLDPQLAKMVIASCDYNCSNEVLSITAMLSVPQCFVRPTEAKKAADEAKMRFAHIDGDHLTLLNVYHAFKQNHESVQWCYDNFINYRSLMSADNVRQQLSRIMDRFNLPRRSTDFTSRDYYINIRKALVTGYFMQVAHLERTGHYLTVKDNQVVQLHPSTVLDHKPEWVLYNEFVLTTKNYIRTCTDIKPEWLVKIAPQYYDMSNFPQCEAKRQLDRIIAKLQSKEYSQY.

The disordered stretch occupies residues 1–108 (MSKRHRLDLG…HSTHAGHAGH (108 aa)). Residue Ser15 is modified to Phosphoserine. The span at 20 to 62 (AGTDGKDRDRDRDREDRSKDRDRERDRGDREREREKEKEKELR) shows a compositional bias: basic and acidic residues. Residues 79–108 (ASHSAHSTHSAHSTHSTHSAHSTHAGHAGH) show a composition bias toward low complexity. Positions 147-313 (TDILVRHQSF…FDNCPLLTIP (167 aa)) constitute a Helicase ATP-binding domain. Position 160–167 (160–167 (GETGSGKT)) interacts with ATP. The short motif at 260–263 (DEAH) is the DEAH box element. The Helicase C-terminal domain maps to 338-518 (TVIQIHMCEE…SVVLQLKKLG (181 aa)). Lys488 is modified (N6-acetyllysine). Lys786 participates in a covalent cross-link: Glycyl lysine isopeptide (Lys-Gly) (interchain with G-Cter in SUMO2).

This sequence belongs to the DEAD box helicase family. DEAH subfamily. DDX15/PRP43 sub-subfamily. In terms of assembly, component of the U11/U12 snRNPs that are part of the U12-type spliceosome. Identified in the Intron Large spliceosome complex (IL, also named intron lariat spliceosome), a post-mRNA release spliceosomal complex containing the excised intron, U2, U5 and U6 snRNPs, and splicing factors; the association may be transient. The IL complex exists in two distinct conformations, one with the DHX15 (ILS2) and one without (ILS1). Interacts with TFIP11 (via G-patch domain); indicative for a recruitment to the IL complex. Interacts with SSB/La. Interacts with GPATCH2 (via G-patch domain); promoting the RNA helicase activity. Interacts with NKRF (via G-patch domain); promoting the RNA helicase activity. Interacts with NLRP6. Ubiquitous.

The protein localises to the nucleus. Its subcellular location is the nucleolus. It catalyses the reaction ATP + H2O = ADP + phosphate + H(+). Its activity is regulated as follows. ATPase activity is enhanced upon binding to G-patch domain-containing proteins. G-patch domain-containing proteins act like a brace that tethers mobile sections of DHX15 together, stabilizing a functional conformation with high RNA affinity, thereby promoting the ATPase activity. RNA helicase involved in mRNA processing and antiviral innate immunity. Pre-mRNA processing factor involved in disassembly of spliceosomes after the release of mature mRNA. In cooperation with TFIP11 seem to be involved in the transition of the U2, U5 and U6 snRNP-containing IL complex to the snRNP-free IS complex leading to efficient debranching and turnover of excised introns. Plays a key role in antiviral innate immunity by promoting both MAVS-dependent signaling and NLRP6 inflammasome. Acts as an RNA virus sensor: recognizes and binds viral double stranded RNA (dsRNA) and activates the MAVS-dependent signaling to produce interferon-beta and interferon lambda-3 (IFNL3). Involved in intestinal antiviral innate immunity together with NLRP6: recognizes and binds viral dsRNA and promotes activation of the NLRP6 inflammasome in intestinal epithelial cells to restrict infection by enteric viruses. The NLRP6 inflammasome acts by promoting maturation and secretion of IL18 in the extracellular milieu. Also involved in antibacterial innate immunity by promoting Wnt-induced antimicrobial protein expression in Paneth cells. The polypeptide is ATP-dependent RNA helicase DHX15 (Homo sapiens (Human)).